Reading from the N-terminus, the 147-residue chain is NAD(P)H-quinone oxidoreductase subunit N (147 aa).

This sequence belongs to the complex I NdhN subunit family. In terms of assembly, NDH-1 can be composed of about 15 different subunits; different subcomplexes with different compositions have been identified which probably have different functions.

It is found in the cellular thylakoid membrane. It carries out the reaction a plastoquinone + NADH + (n+1) H(+)(in) = a plastoquinol + NAD(+) + n H(+)(out). It catalyses the reaction a plastoquinone + NADPH + (n+1) H(+)(in) = a plastoquinol + NADP(+) + n H(+)(out). Its function is as follows. NDH-1 shuttles electrons from an unknown electron donor, via FMN and iron-sulfur (Fe-S) centers, to quinones in the respiratory and/or the photosynthetic chain. The immediate electron acceptor for the enzyme in this species is believed to be plastoquinone. Couples the redox reaction to proton translocation, and thus conserves the redox energy in a proton gradient. Cyanobacterial NDH-1 also plays a role in inorganic carbon-concentration. The chain is NAD(P)H-quinone oxidoreductase subunit N from Synechococcus sp. (strain JA-2-3B'a(2-13)) (Cyanobacteria bacterium Yellowstone B-Prime).